Here is a 205-residue protein sequence, read N- to C-terminus: Ribosomal RNA small subunit methyltransferase G (205 aa).

Residues G73, L78, 124-125, and R139 each bind S-adenosyl-L-methionine; that span reads VE.

Belongs to the methyltransferase superfamily. RNA methyltransferase RsmG family.

It localises to the cytoplasm. It carries out the reaction guanosine(527) in 16S rRNA + S-adenosyl-L-methionine = N(7)-methylguanosine(527) in 16S rRNA + S-adenosyl-L-homocysteine. Functionally, specifically methylates the N7 position of guanine in position 527 of 16S rRNA. This is Ribosomal RNA small subunit methyltransferase G from Erwinia tasmaniensis (strain DSM 17950 / CFBP 7177 / CIP 109463 / NCPPB 4357 / Et1/99).